We begin with the raw amino-acid sequence, 363 residues long: Tetraacyldisaccharide 4'-kinase (363 aa).

Thr78–Thr85 lines the ATP pocket.

This sequence belongs to the LpxK family.

The enzyme catalyses a lipid A disaccharide + ATP = a lipid IVA + ADP + H(+). It participates in glycolipid biosynthesis; lipid IV(A) biosynthesis; lipid IV(A) from (3R)-3-hydroxytetradecanoyl-[acyl-carrier-protein] and UDP-N-acetyl-alpha-D-glucosamine: step 6/6. Functionally, transfers the gamma-phosphate of ATP to the 4'-position of a tetraacyldisaccharide 1-phosphate intermediate (termed DS-1-P) to form tetraacyldisaccharide 1,4'-bis-phosphate (lipid IVA). This chain is Tetraacyldisaccharide 4'-kinase, found in Wigglesworthia glossinidia brevipalpis.